Reading from the N-terminus, the 394-residue chain is Protein maelstrom (394 aa).

The segment at residues 2-69 (APKKQNGFMM…ARRDKRGSLN (68 aa)) is a DNA-binding region (HMG box). The segment at 44 to 93 (TQQRGPYNSDAKDANAARRDKRGSLNGHGQVDKAQREAAESLMDKAQREA) is disordered. Over residues 73-93 (QVDKAQREAAESLMDKAQREA) the composition is skewed to basic and acidic residues.

Belongs to the maelstrom family.

It localises to the cytoplasm. Its subcellular location is the nucleus. Functionally, involved both in the piRNA and miRNA metabolic processes. As a component of the meiotic nuage, plays a central role during oogenesis by repressing transposable elements and preventing their mobilization, which is essential for the germline integrity. Repression of transposable elements is mediated via the piRNA metabolic process, which mediates the repression of transposable elements during meiosis by forming complexes composed of piRNAs and Piwi proteins and governs the repression of transposons. As a nuclear component, it is required for proper differentiation in the germline stem cell (GSC) lineage by repressing microRNA-7 (miR-7), thereby acting as an indirect regulator of bag-of-marbles (Bam). Acts by binding to the promoter of miR-7 gene and repressing its expression; miR-7 repression alleviates the Bam repression by miR-7, thereby allowing differentiation in the germline stem cell (GSC) lineage. This is Protein maelstrom (mael) from Drosophila simulans (Fruit fly).